The primary structure comprises 647 residues: MIKITFPDGAIREFESGITTFEIAQSISNSLAKKALAGKFNGQLIDTTRAIEEDGSIEIVTPDHEDALGVLRHSAAHLFAQAAKRLFPDLCLGVGPAIQDGFYYDTDNKSGQISNDDLPRIEEEMKKIVKENHPCIREEISKEEALELFKDDPYKVELISEHAEDGLTVYRQGEFVDLCRGPHVPSTGRIQVFHLLNVAGAYWRGNSDNAMMQRVYGTAWFDKKDLKAYLKRREEAKERDHRKLGKELDLFMVNPEVGQGLPFWLPNGATIRRELERYIVDKEIASGYQHVYTPPMASVEFYKTSGHWDHYREDMFPTMDMGDGEEFVLRPMNCPHHIEVYKHHVHSYRELPIRIAELGMMHRYEKSGALTGLQRVREMTLNDAHIFVTPEQIKDEFLKALNLIAEIYEDFNLTDYRFRLSYRDPEDKHKYYDNDEMWENAQAMLKEAMDDFGLDYFEAEGEAAFYGPKLDIQVKTALGNEETLSTIQLDFLLPERFDLKYIGADGEEHRPIMIHRGGISTMERFTAILIETYKGAFPTWLAPQQVSVIPISNEAHIDYAWEVARVLKDRGIRAEVDDRNEKMQYKIRAAQTQKIPYQLIVGDKEMEEKAVNVRRYGSKATETKSIEEFVESILADIARKSRPDEVK.

The 61-residue stretch at 1–61 (MIKITFPDGA…EEDGSIEIVT (61 aa)) folds into the TGS domain. Positions 240-538 (DHRKLGKELD…LIETYKGAFP (299 aa)) are catalytic. Zn(2+) is bound by residues Cys334, His385, and His515.

Belongs to the class-II aminoacyl-tRNA synthetase family. Homodimer. The cofactor is Zn(2+).

The protein localises to the cytoplasm. It carries out the reaction tRNA(Thr) + L-threonine + ATP = L-threonyl-tRNA(Thr) + AMP + diphosphate + H(+). Its function is as follows. Catalyzes the attachment of threonine to tRNA(Thr) in a two-step reaction: L-threonine is first activated by ATP to form Thr-AMP and then transferred to the acceptor end of tRNA(Thr). Also edits incorrectly charged L-seryl-tRNA(Thr). In Streptococcus agalactiae serotype V (strain ATCC BAA-611 / 2603 V/R), this protein is Threonine--tRNA ligase.